The following is a 1048-amino-acid chain: FHIP family protein GJ17503 (1048 aa).

A compositionally biased stretch (polar residues) spans 1–15 (MSWLRTSPLRQSLTR). The tract at residues 1 to 32 (MSWLRTSPLRQSLTRNSGSSGSGNSSATTTLR) is disordered. Positions 16–26 (NSGSSGSGNSS) are enriched in low complexity. Serine 500 carries the post-translational modification Phosphoserine. 3 disordered regions span residues 652–675 (TTTATSDTDLEHNNSSSIGSGRRD), 813–871 (APMH…KRRS), and 924–984 (ARGA…ESGL). Low complexity predominate over residues 816-838 (HQQHQQQQLQHTTNPTQQQQAQQ). 2 stretches are compositionally biased toward polar residues: residues 839–857 (RSTYATLSAATPVQASPTS) and 929–954 (QEQSRGNTCETSLSTAPRQEAQTAVV). Residues 955 to 978 (SSSNSSIGGSTQTLSATHSSSTLH) are compositionally biased toward low complexity.

This sequence belongs to the FHIP family.

This is FHIP family protein GJ17503 from Drosophila virilis (Fruit fly).